The sequence spans 199 residues: Peroxiredoxin-1 (199 aa).

S2 bears the N-acetylserine mark. The region spanning A6–F165 is the Thioredoxin domain. An N6-acetyllysine; alternate modification is found at K7. Residue K7 forms a Glycyl lysine isopeptide (Lys-Gly) (interchain with G-Cter in SUMO2); alternate linkage. N6-acetyllysine is present on residues K16 and K27. Position 32 is a phosphoserine (S32). N6-acetyllysine; alternate is present on K35. An N6-succinyllysine; alternate modification is found at K35. Catalysis depends on C52, which acts as the Cysteine sulfenic acid (-SOH) intermediate. Residue T90 is modified to Phosphothreonine; by CDK1. K120 is covalently cross-linked (Glycyl lysine isopeptide (Lys-Gly) (interchain with G-Cter in SUMO2)). K136 is modified (N6-acetyllysine). The segment at G176–K199 is disordered. Residues I184–K199 are compositionally biased toward basic and acidic residues. A Glycyl lysine isopeptide (Lys-Gly) (interchain with G-Cter in SUMO1) cross-link involves residue K185. An N6-acetyllysine modification is found at K197.

This sequence belongs to the peroxiredoxin family. AhpC/Prx1 subfamily. In terms of assembly, homodimer; disulfide-linked, upon oxidation. 5 homodimers assemble to form a ring-like decamer. Interacts with GDPD5; forms a mixed-disulfide with GDPD5. Interacts with SESN1 and SESN2. Interacts with FAM107A. Post-translationally, phosphorylated on Thr-90 during the M-phase, which leads to a more than 80% decrease in enzymatic activity. Acetylation increases reducing activity and resistance to superoxidation. Deacetylated by HDAC6 which decreases reducing activity. In terms of processing, the enzyme can be inactivated by further oxidation of the cysteine sulfenic acid (C(P)-SOH) to sulphinic acid (C(P)-SO2H) instead of its condensation to a disulfide bond. It can be reactivated by forming a transient disulfide bond with sulfiredoxin SRXN1, which reduces the cysteine sulfinic acid in an ATP- and Mg-dependent manner.

The protein resides in the cytoplasm. Its subcellular location is the melanosome. It catalyses the reaction a hydroperoxide + [thioredoxin]-dithiol = an alcohol + [thioredoxin]-disulfide + H2O. In terms of biological role, thiol-specific peroxidase that catalyzes the reduction of hydrogen peroxide and organic hydroperoxides to water and alcohols, respectively. Plays a role in cell protection against oxidative stress by detoxifying peroxides and as sensor of hydrogen peroxide-mediated signaling events. Might participate in the signaling cascades of growth factors and tumor necrosis factor-alpha by regulating the intracellular concentrations of H(2)O(2). Reduces an intramolecular disulfide bond in GDPD5 that gates the ability to GDPD5 to drive postmitotic motor neuron differentiation. The sequence is that of Peroxiredoxin-1 (PRDX1) from Homo sapiens (Human).